The sequence spans 477 residues: Argininosuccinate lyase (477 aa).

Belongs to the lyase 1 family. Argininosuccinate lyase subfamily.

It localises to the cytoplasm. The enzyme catalyses 2-(N(omega)-L-arginino)succinate = fumarate + L-arginine. Its pathway is amino-acid biosynthesis; L-arginine biosynthesis; L-arginine from L-ornithine and carbamoyl phosphate: step 3/3. The chain is Argininosuccinate lyase from Acinetobacter baumannii (strain ACICU).